A 681-amino-acid chain; its full sequence is RNA polymerase sigma factor RpoD (681 aa).

2 disordered regions span residues 1–60 (MKKK…ETAK) and 239–270 (DDDENSVSDPKKDDDSEEDEENEERKKVVSEK). Over residues 261-270 (EERKKVVSEK) the composition is skewed to basic and acidic residues. The segment at 446–516 (MAKSNLRLVV…SRAIADQART (71 aa)) is sigma-70 factor domain-2. Residues 470 to 473 (DLIQ) carry the Interaction with polymerase core subunit RpoC motif. The tract at residues 525 to 601 (DTINRINKVM…DKNIVSSIDH (77 aa)) is sigma-70 factor domain-3. Residues 614-668 (VLDQLNEREKAVIRMRFGLLDDESDRTLEEIGKELNVTRERVRQIESSAIKKLRS) form a sigma-70 factor domain-4 region. Positions 641–660 (LEEIGKELNVTRERVRQIES) form a DNA-binding region, H-T-H motif.

The protein belongs to the sigma-70 factor family. RpoD/SigA subfamily. As to quaternary structure, interacts transiently with the RNA polymerase catalytic core.

It is found in the cytoplasm. Functionally, sigma factors are initiation factors that promote the attachment of RNA polymerase to specific initiation sites and are then released. This sigma factor is the primary sigma factor during exponential growth. This chain is RNA polymerase sigma factor RpoD, found in Helicobacter pylori (strain J99 / ATCC 700824) (Campylobacter pylori J99).